A 665-amino-acid chain; its full sequence is BTB/POZ domain-containing protein At1g30440 (665 aa).

A BTB domain is found at 28–98 (SDIVVEVGEM…CYGVKLELTA (71 aa)). The NPH3 domain maps to 214-508 (DWWYEDASML…VQVLFFEQLQ (295 aa)). A disordered region spans residues 260-280 (LKRRRGGPESSGRFSTPLGSG). Residues 271-280 (GRFSTPLGSG) show a composition bias toward polar residues. Ser279 carries the phosphoserine modification. Positions 281–306 (NVLSEEEQKNLLEEIQELLRMQKGLV) form a coiled coil. Tyr449 carries the phosphotyrosine modification. Polar residues predominate over residues 626-639 (SAQEGSVSKSNNEN). Residues 626–665 (SAQEGSVSKSNNENVKIEKLKDVKERRGKHKKASSISSER) form a disordered region. Basic and acidic residues predominate over residues 640 to 650 (VKIEKLKDVKE).

It belongs to the NPH3 family.

It functions in the pathway protein modification; protein ubiquitination. May act as a substrate-specific adapter of an E3 ubiquitin-protein ligase complex (CUL3-RBX1-BTB) which mediates the ubiquitination and subsequent proteasomal degradation of target proteins. This is BTB/POZ domain-containing protein At1g30440 from Arabidopsis thaliana (Mouse-ear cress).